Reading from the N-terminus, the 231-residue chain is MDQQDHGQSGAMNYGTNPYQTNPMSTTAATVAGGAAQPGQLAFHQIHQQQQQQQLAQQLQAFWENQFKEIEKTTDFKNHSLPLARIKKIMKADEDVRMISAEAPVVFARACEMFILELTLRSWNHTEENKRRTLQKNDIAAAVTRTDIFDFLVDIVPREDLRDEVLGSIPRGTVPEAAAAGYPYGYLPAGTAPIGNPGMVMGNPGGAYPPNPYMGQPMWQQQAPDQPDQEN.

A disordered region spans residues 211–231 (NPYMGQPMWQQQAPDQPDQEN).

It belongs to the NFYC/HAP5 subunit family. In terms of assembly, heterotrimeric transcription factor composed of three components, NF-YA, NF-YB and NF-YC. Interacts with NFYA2, NFYB2, CO and RGA. Interacts with REF6 (via N-terminus). As to expression, ubiquitous. Present in etiolated seedlings.

It is found in the nucleus. In terms of biological role, stimulates the transcription of various genes by recognizing and binding to a CCAAT motif in promoters. Interacts with REF6 to directly regulate SOC1 transcription in response to flowering signals from photoperiod and gibberellic acid pathways. In Arabidopsis thaliana (Mouse-ear cress), this protein is Nuclear transcription factor Y subunit C-9 (NFYC9).